The primary structure comprises 429 residues: Malate dehydrogenase [NADP] 1, chloroplastic (429 aa).

A chloroplast-targeting transit peptide spans 1-40 (MGLSTAYSPVGSHLAPAPLGHRRSAQLHRPRRALLATVRC). Residues Cys-64 and Cys-69 are joined by a disulfide bond. Residue 93 to 99 (GAAGMIS) coordinates NADP(+). The substrate site is built by Arg-174 and Arg-180. NADP(+) contacts are provided by residues Asn-187, Gln-194, and 211-213 (VGN). Substrate-binding residues include Asn-213 and Arg-244. Catalysis depends on His-269, which acts as the Proton acceptor. Cys-405 and Cys-417 are oxidised to a cystine.

Belongs to the LDH/MDH superfamily. MDH type 2 family. Homodimer.

The protein localises to the plastid. It localises to the chloroplast. It catalyses the reaction (S)-malate + NADP(+) = oxaloacetate + NADPH + H(+). Its activity is regulated as follows. Chloroplast NADP-MDH is activated upon illumination. In order to be enzymatically active, disulfide bridges on the protein must be reduced by thioredoxin which receives electrons from ferredoxin and the electron transport system of photosynthesis. Functionally, the chloroplastic, NADP-dependent form is essential for the photosynthesis C4 cycle, which allows plants to circumvent the problem of photorespiration. In C4 plants, NADP-MDH activity acts to convert oxaloacetate to malate in chloroplasts of mesophyll cells for transport to the bundle sheath cells. The polypeptide is Malate dehydrogenase [NADP] 1, chloroplastic (Sorghum bicolor (Sorghum)).